Here is a 314-residue protein sequence, read N- to C-terminus: Solute carrier family 25 member 44 (314 aa).

Solcar repeat units lie at residues 18 to 100 (KKFY…TRKF), 107 to 210 (SNTV…YAEQ), and 220 to 302 (PHIV…LKKL). 6 helical membrane passes run 20–42 (FYVF…TLIR), 71–90 (AGLY…GQCY), 113–133 (LVAG…IDVV), 185–201 (GYVA…AVWW), 222–239 (IVFQ…ASIL), and 278–296 (LSAR…VVGY).

The protein belongs to the mitochondrial carrier (TC 2.A.29) family. Highly expressed in brown adipose tissues compared with other metabolic organs.

The protein resides in the mitochondrion membrane. The catalysed reaction is L-valine(in) = L-valine(out). It carries out the reaction L-leucine(in) = L-leucine(out). Its function is as follows. Mitochondrial solute transporter which transports branched-chain amino acid (BCAA; valine, leucine and isoleucine) into mitochondria in brown adipose tissue (BAT). BAT is involved in BCAA catabolism and actively utilizes BCAA in the mitochondria for thermogenesis. This Mus musculus (Mouse) protein is Solute carrier family 25 member 44.